Consider the following 258-residue polypeptide: Imidazole glycerol phosphate synthase subunit HisF (258 aa).

Catalysis depends on residues D11 and D130.

The protein belongs to the HisA/HisF family. In terms of assembly, heterodimer of HisH and HisF.

The protein localises to the cytoplasm. The enzyme catalyses 5-[(5-phospho-1-deoxy-D-ribulos-1-ylimino)methylamino]-1-(5-phospho-beta-D-ribosyl)imidazole-4-carboxamide + L-glutamine = D-erythro-1-(imidazol-4-yl)glycerol 3-phosphate + 5-amino-1-(5-phospho-beta-D-ribosyl)imidazole-4-carboxamide + L-glutamate + H(+). It functions in the pathway amino-acid biosynthesis; L-histidine biosynthesis; L-histidine from 5-phospho-alpha-D-ribose 1-diphosphate: step 5/9. Its function is as follows. IGPS catalyzes the conversion of PRFAR and glutamine to IGP, AICAR and glutamate. The HisF subunit catalyzes the cyclization activity that produces IGP and AICAR from PRFAR using the ammonia provided by the HisH subunit. In Methylobacterium sp. (strain 4-46), this protein is Imidazole glycerol phosphate synthase subunit HisF.